The sequence spans 196 residues: Glycerol-3-phosphate acyltransferase (196 aa).

4 helical membrane passes run 4-24, 80-100, 114-134, and 155-175; these read LTLLMILSAYLLGSISSAVVI, PFFLGLIAVAACLGHIFPLYF, AMFPVAWEMALLLIATWLLVF, and AYWIKPQYTVPVIMISLLILW.

It belongs to the PlsY family. As to quaternary structure, probably interacts with PlsX.

It localises to the cell inner membrane. It catalyses the reaction an acyl phosphate + sn-glycerol 3-phosphate = a 1-acyl-sn-glycero-3-phosphate + phosphate. The protein operates within lipid metabolism; phospholipid metabolism. Its function is as follows. Catalyzes the transfer of an acyl group from acyl-phosphate (acyl-PO(4)) to glycerol-3-phosphate (G3P) to form lysophosphatidic acid (LPA). This enzyme utilizes acyl-phosphate as fatty acyl donor, but not acyl-CoA or acyl-ACP. The chain is Glycerol-3-phosphate acyltransferase from Idiomarina loihiensis (strain ATCC BAA-735 / DSM 15497 / L2-TR).